We begin with the raw amino-acid sequence, 173 residues long: Succinate dehydrogenase assembly factor 3, mitochondrial (173 aa).

Residues 1–59 (MFRPSTSLALRSTLRQLASASNQPIPPGSEINAVKRTVATILPPIRLYRRIIRAHRRLD) constitute a mitochondrion transit peptide. Residues 149–173 (FPPEKQRELAEKAAADAGLSVKKDE) form a disordered region. The segment covering 152–162 (EKQRELAEKAA) has biased composition (basic and acidic residues).

This sequence belongs to the complex I LYR family. SDHAF3 subfamily. As to quaternary structure, interacts with the iron-sulfur protein subunit within the SDH catalytic dimer.

It localises to the mitochondrion matrix. In terms of biological role, plays an essential role in the assembly of succinate dehydrogenase (SDH), an enzyme complex (also referred to as respiratory complex II) that is a component of both the tricarboxylic acid (TCA) cycle and the mitochondrial electron transport chain, and which couples the oxidation of succinate to fumarate with the reduction of ubiquinone (coenzyme Q) to ubiquinol. Promotes maturation of the iron-sulfur protein subunit of the SDH catalytic dimer, protecting it from the deleterious effects of oxidants. May act together with SDHAF1. The sequence is that of Succinate dehydrogenase assembly factor 3, mitochondrial from Mycosarcoma maydis (Corn smut fungus).